A 249-amino-acid chain; its full sequence is ATP synthase subunit a, chloroplastic (249 aa).

5 helical membrane passes run 40–60 (QVLI…VLAI), 97–117 (VPFI…GALL), 136–156 (INTT…AGLS), 201–221 (LVVV…VMFL), and 222–242 (GLFT…AYIG).

The protein belongs to the ATPase A chain family. F-type ATPases have 2 components, CF(1) - the catalytic core - and CF(0) - the membrane proton channel. CF(1) has five subunits: alpha(3), beta(3), gamma(1), delta(1), epsilon(1). CF(0) has four main subunits: a, b, b' and c.

The protein resides in the plastid. The protein localises to the chloroplast thylakoid membrane. Its function is as follows. Key component of the proton channel; it plays a direct role in the translocation of protons across the membrane. The protein is ATP synthase subunit a, chloroplastic of Nasturtium officinale (Watercress).